The primary structure comprises 467 residues: Probable endopeptidase p60 (467 aa).

Positions 1–27 (MNMKKATIAATAGIAVTAFAAPTIASA) are cleaved as a signal peptide. One can recognise a LysM 1 domain in the interval 28 to 71 (STVVVEAGDTLWGIAQSKGTTVDAIKKANNLTTDKIVPGQKLQV). An SH3b domain is found at 79-143 (KAEKSVSATW…VNGKYLTDKA (65 aa)). Disordered stretches follow at residues 154–199 (KKET…QNAT) and 247–348 (KTVA…GSTN). A compositionally biased stretch (low complexity) spans 172–185 (KQPTTQQTAPAPKA). A LysM 2 domain is found at 199–242 (TTHNVKSGDTIWALSVKYGVSVQDIMSWNNLSSSSIYVGQKLAI). Residues 288 to 348 (TEQQTTTKAP…NTNTNQGSTN (61 aa)) are compositionally biased toward low complexity. The segment at 330–343 (TNTNTNTNTNTNTN) is 7 X 2 AA tandem repeats of T-N. The NlpC/P60 domain occupies 349-467 (NASASALIAE…GKFLVGFGRV (119 aa)). The active-site Nucleophile is C379. H429 functions as the Proton acceptor in the catalytic mechanism. The active site involves N441.

This sequence belongs to the peptidase C40 family.

This major extracellular protein may be involved in the invasion of non-professional phagocytic cells by Listeria. In Listeria innocua serovar 6a (strain ATCC BAA-680 / CLIP 11262), this protein is Probable endopeptidase p60 (iap).